The sequence spans 250 residues: U6 snRNA phosphodiesterase 1 (250 aa).

The disordered stretch occupies residues 1–31 (MALVSYSSSEEDEGETSEPPGRRLPPLPPPT). The segment covering 22-31 (RRLPPLPPPT) has biased composition (pro residues). Histidine 105 functions as the Proton acceptor in the catalytic mechanism. 105 to 107 (HIS) serves as a coordination point for AMP. UMP contacts are provided by residues glutamine 149, tyrosine 187, and 191–195 (SFHVS). AMP contacts are provided by residues tyrosine 187 and 189–195 (EPSFHVS). Catalysis depends on histidine 193, which acts as the Proton donor.

It belongs to the 2H phosphoesterase superfamily. USB1 family.

The protein resides in the nucleus. The enzyme catalyses a 3'-end uridylyl-uridine-RNA = a 3'-end 2',3'-cyclophospho-uridine-RNA + uridine. The catalysed reaction is a 3'-end uridylyl-adenosine-RNA = a 3'-end 2',3'-cyclophospho-uridine-RNA + adenosine. Functionally, 3'-5' RNA exonuclease that trims the 3' end of oligo(U) and oligo(A) tracts of the pre-U6 small nuclear RNA (snRNA) molecule, leading to the formation of a mature U6 snRNA 3' end-terminated with a 2',3'-cyclic phosphate. Participates in the U6 snRNA 3' end processing that prevents U6 snRNA degradation. In addition also removes uridines from the 3' end of U6atac snRNA and possibly the vault RNA VTRNA1-1. This Xenopus laevis (African clawed frog) protein is U6 snRNA phosphodiesterase 1.